A 98-amino-acid chain; its full sequence is PE family immunomodulator PE35 (98 aa).

Positions 1-90 (MEKMSHDPIA…DVARTYSQID (90 aa)) constitute a PE domain.

Belongs to the mycobacterial PE family. In terms of assembly, interacts with PPE68. PE35/PPE68 complex interacts with human TLR2.

It localises to the secreted. The protein localises to the cell surface. In terms of biological role, plays a major role in RD1-associated pathogenesis, and may contribute to the establishment and maintenance of M.tuberculosis infection. Together with PPE68, stimulates the secretion of IL-10 and MCP-1 from human macrophages, via the interaction with human Toll-like receptor 2 (TLR2). This is PE family immunomodulator PE35 (PE35) from Mycobacterium tuberculosis (strain CDC 1551 / Oshkosh).